The following is a 213-amino-acid chain: ATP phosphoribosyltransferase (213 aa).

Belongs to the ATP phosphoribosyltransferase family. Short subfamily. As to quaternary structure, heteromultimer composed of HisG and HisZ subunits.

Its subcellular location is the cytoplasm. The enzyme catalyses 1-(5-phospho-beta-D-ribosyl)-ATP + diphosphate = 5-phospho-alpha-D-ribose 1-diphosphate + ATP. Its pathway is amino-acid biosynthesis; L-histidine biosynthesis; L-histidine from 5-phospho-alpha-D-ribose 1-diphosphate: step 1/9. Functionally, catalyzes the condensation of ATP and 5-phosphoribose 1-diphosphate to form N'-(5'-phosphoribosyl)-ATP (PR-ATP). Has a crucial role in the pathway because the rate of histidine biosynthesis seems to be controlled primarily by regulation of HisG enzymatic activity. The sequence is that of ATP phosphoribosyltransferase from Listeria monocytogenes serotype 4b (strain F2365).